The following is a 158-amino-acid chain: Phospholipase A2 AP-PLA2-II (158 aa).

A signal peptide spans 1-16 (MKTFLILAMAVALAKA). A propeptide spanning residues 17 to 23 (QSTDEIT) is cleaved from the precursor. Disulfide bonds link cysteine 51–cysteine 158, cysteine 53–cysteine 69, cysteine 68–cysteine 138, cysteine 75–cysteine 131, cysteine 85–cysteine 124, and cysteine 109–cysteine 129. Ca(2+) is bound by residues glycine 54 and glycine 56. Histidine 72 is an active-site residue. Residue aspartate 73 coordinates Ca(2+). Aspartate 132 is a catalytic residue.

Belongs to the phospholipase A2 family. Group I subfamily. As to quaternary structure, monomer. Requires Ca(2+) as cofactor. Expressed by the venom gland.

It localises to the secreted. It carries out the reaction a 1,2-diacyl-sn-glycero-3-phosphocholine + H2O = a 1-acyl-sn-glycero-3-phosphocholine + a fatty acid + H(+). In terms of biological role, starfish phospholipase A2 (PLA2) that has hemorrhagic and capillary permeability-increasing activities and hence is considered to be deeply involved in the local inflammation. Shows hemolytic activity only in the presence of phosphatidylcholine (PC). PLA2 catalyzes the calcium-dependent hydrolysis of the 2-acyl groups in 3-sn-phosphoglycerides. The protein is Phospholipase A2 AP-PLA2-II of Acanthaster planci (Crown-of-thorns starfish).